A 696-amino-acid polypeptide reads, in one-letter code: Probable E3 ubiquitin ligase complex SCF subunit sconB (696 aa).

The segment covering 1-12 has biased composition (basic and acidic residues); it reads MDAHELSFRDGH. Residues 1-72 are disordered; the sequence is MDAHELSFRD…HSFNTQKPIR (72 aa). Positions 55–69 are enriched in polar residues; it reads PGSTQDKPHSFNTQK. The F-box domain maps to 193 to 239; the sequence is IDFLTALPPEISFKILCYLDTTSLCKAAQVSRRWRALADDDVVWHRM. A disordered region spans residues 290 to 314; it reads SATIETAAAGSKRKPESGKEDTAMV. The segment covering 302–313 has biased composition (basic and acidic residues); that stretch reads RKPESGKEDTAM. WD repeat units follow at residues 365-402, 405-444, 446-482, 484-525, 579-622, 623-662, and 665-696; these read GHSN…ELRT, GHQS…STYS, HRGG…TCLL, GHTD…RTFH, DTPS…CLRT, FFGH…CERT, and GHSG…SFQT. The segment at 554 to 596 is disordered; sequence NVSVTSGDSPAASPQALPGFDGQTSDTPSSAFGPAFDDGRPSP.

This sequence belongs to the WD repeat MET30/SCONB/SCON-2 family. As to quaternary structure, component of the SCF(sconB) E3 ubiquitin ligase complex.

It participates in protein modification; protein ubiquitination. In terms of biological role, component of the SCF(sconB) E3 ubiquitin ligase complex involved in the regulation of sulfur metabolite repression, probably by mediating the inactivation or degradation of the metR transcription factor. The chain is Probable E3 ubiquitin ligase complex SCF subunit sconB (sconB) from Aspergillus fumigatus (strain ATCC MYA-4609 / CBS 101355 / FGSC A1100 / Af293) (Neosartorya fumigata).